The primary structure comprises 203 residues: MKVLIPFYSMYGHIYRMAEAVAEGVREVSGAEAVLRRVPETLPTDVLQKMGAVEPQKAFAHIPVCTVDELAAADAIIFGTPTRFGNMCGQMRQFLDATGGLWVKGGLVGKAGGVFTSSATQHGGQESTILTFHTFLLHQGMVLVGLPYAFAGQMRIDEITGGSPYGASTIAGGQGERLPSENELAGARYQGKYIAEIAAKLKG.

The 192-residue stretch at 3–194 (VLIPFYSMYG…AGARYQGKYI (192 aa)) folds into the Flavodoxin-like domain. Residues 9–14 (SMYGHI) and 82–84 (TRF) each bind FMN. Residue Tyr-11 participates in NAD(+) binding. Residue Trp-102 coordinates substrate. FMN-binding positions include 117-123 (SSATQHG) and His-138.

The protein belongs to the WrbA family. The cofactor is FMN.

It carries out the reaction a quinone + NADH + H(+) = a quinol + NAD(+). It catalyses the reaction a quinone + NADPH + H(+) = a quinol + NADP(+). The protein is NAD(P)H dehydrogenase (quinone) of Geobacter metallireducens (strain ATCC 53774 / DSM 7210 / GS-15).